We begin with the raw amino-acid sequence, 127 residues long: MNKHHYNRNKHKIPEKVKWISISIFFILSFFINMCFYETQLFIRIFIISCLMLCAIGTMIYTKKGKDILLYIVMSKKEMQKIIWPKYKETLYTTFIVISVTIFISFILWSIDSVIFRLIAFIISLRF.

Helical transmembrane passes span 17–37 (VKWI…MCFY), 41–61 (LFIR…TMIY), and 95–115 (FIVI…DSVI).

This sequence belongs to the SecE/SEC61-gamma family. In terms of assembly, component of the Sec protein translocase complex. Heterotrimer consisting of SecY, SecE and SecG subunits. The heterotrimers can form oligomers, although 1 heterotrimer is thought to be able to translocate proteins. Interacts with the ribosome. Interacts with SecDF, and other proteins may be involved. Interacts with SecA.

The protein localises to the cell inner membrane. Functionally, essential subunit of the Sec protein translocation channel SecYEG. Clamps together the 2 halves of SecY. May contact the channel plug during translocation. The protein is Protein translocase subunit SecE of Buchnera aphidicola subsp. Acyrthosiphon pisum (strain APS) (Acyrthosiphon pisum symbiotic bacterium).